Here is a 345-residue protein sequence, read N- to C-terminus: Very-long-chain 3-oxoacyl-CoA reductase (345 aa).

Residues 26 to 46 (GAAVLLTTGTLFIASRVLTFV) form a helical membrane-spanning segment. NADP(+) contacts are provided by valine 71, aspartate 125, aspartate 133, asparagine 152, tyrosine 219, lysine 223, isoleucine 252, and serine 254. The active-site Proton donor is tyrosine 219. Lysine 223 (lowers pKa of active site Tyr) is an active-site residue.

This sequence belongs to the short-chain dehydrogenases/reductases (SDR) family.

It is found in the endoplasmic reticulum membrane. The enzyme catalyses a very-long-chain (3R)-3-hydroxyacyl-CoA + NADP(+) = a very-long-chain 3-oxoacyl-CoA + NADPH + H(+). The protein operates within lipid metabolism; fatty acid biosynthesis. Its function is as follows. Component of the microsomal membrane bound fatty acid elongation system, which produces the 26-carbon very long-chain fatty acids (VLCFA) from palmitate. Catalyzes the reduction of the 3-ketoacyl-CoA intermediate that is formed in each cycle of fatty acid elongation. VLCFAs serve as precursors for ceramide and sphingolipids. The protein is Very-long-chain 3-oxoacyl-CoA reductase of Aspergillus fumigatus (strain CBS 144.89 / FGSC A1163 / CEA10) (Neosartorya fumigata).